Reading from the N-terminus, the 243-residue chain is tRNA (guanine-N(1)-)-methyltransferase (243 aa).

S-adenosyl-L-methionine contacts are provided by residues Gly111 and 130–135 (IGDYVL).

It belongs to the RNA methyltransferase TrmD family. In terms of assembly, homodimer.

It is found in the cytoplasm. The catalysed reaction is guanosine(37) in tRNA + S-adenosyl-L-methionine = N(1)-methylguanosine(37) in tRNA + S-adenosyl-L-homocysteine + H(+). Functionally, specifically methylates guanosine-37 in various tRNAs. In Acholeplasma laidlawii (strain PG-8A), this protein is tRNA (guanine-N(1)-)-methyltransferase.